The primary structure comprises 410 residues: Zinc transporter ttm-1 (410 aa).

2 stretches are compositionally biased toward low complexity: residues 1–13 (MTIS…SIRL) and 35–46 (SVSSSDSGVSAD). A disordered region spans residues 1 to 94 (MTISMISPSS…GAHKHSHDEK (94 aa)). Topologically, residues 1–103 (MTISMISPSS…KYQKGRRAEK (103 aa)) are cytoplasmic. Residues 50 to 69 (HHHHGHGHGHSHGGHGHSHT) are compositionally biased toward basic residues. The helical transmembrane segment at 104–124 (VLWAVAALSAVFIAAEFVGGF) threads the bilayer. Topologically, residues 125-129 (WAQSL) are extracellular. A helical membrane pass occupies residues 130 to 150 (AIMTDAGHMLSDLLSFIISIF). The Cytoplasmic segment spans residues 151-171 (AIRCARLPASKRLSFGYERAE). The chain crosses the membrane as a helical span at residues 172–192 (VLGALTSVIILWVLTTVLVVV). The Extracellular segment spans residues 193–208 (AIQRIVNNEHEVDADV). A helical membrane pass occupies residues 209-229 (MLITAGVGVLFNIVMGLVLHF). The Cytoplasmic segment spans residues 230-258 (GTGGHGHTHGGHSSHGHAHDGKNVNVRAA). Residues 259 to 279 (LIHVIGDLVQSIGVLIAALII) traverse the membrane as a helical segment. Arg280 is a topological domain (extracellular). A helical transmembrane segment spans residues 281–301 (FTGWTLADPICTFLFSIIVLF). Topologically, residues 302–410 (TTVTVMRDIF…CDTCQQQETA (109 aa)) are cytoplasmic.

Belongs to the cation diffusion facilitator (CDF) transporter (TC 2.A.4) family. SLC30A subfamily. In terms of tissue distribution, isoform a: Expressed in the hypodermis and the intestine. Isoform b: Expressed in the intestine, head neurons, seam cells, hypodermis, and the vulva.

The protein localises to the cytoplasmic vesicle membrane. It localises to the apical cell membrane. In terms of biological role, promotes excretion of zinc from intestinal cells into the intestinal lumen in response to increased dietary zinc. Involved in cadmium resistance, possibly by promoting its transport from cells. Involved in resistance to B.thuringiensis pore-forming toxin Cry5B downstream of the sek-1 and pmk-1 MAPK kinase pathway. This Caenorhabditis elegans protein is Zinc transporter ttm-1.